Consider the following 170-residue polypeptide: Adenine phosphoribosyltransferase (170 aa).

This sequence belongs to the purine/pyrimidine phosphoribosyltransferase family. Homodimer.

The protein localises to the cytoplasm. The catalysed reaction is AMP + diphosphate = 5-phospho-alpha-D-ribose 1-diphosphate + adenine. It functions in the pathway purine metabolism; AMP biosynthesis via salvage pathway; AMP from adenine: step 1/1. Catalyzes a salvage reaction resulting in the formation of AMP, that is energically less costly than de novo synthesis. The chain is Adenine phosphoribosyltransferase from Lactococcus lactis subsp. cremoris (strain MG1363).